The following is a 317-amino-acid chain: Methionyl-tRNA formyltransferase (317 aa).

Serine 112–proline 115 contacts (6S)-5,6,7,8-tetrahydrofolate.

It belongs to the Fmt family.

The catalysed reaction is L-methionyl-tRNA(fMet) + (6R)-10-formyltetrahydrofolate = N-formyl-L-methionyl-tRNA(fMet) + (6S)-5,6,7,8-tetrahydrofolate + H(+). Functionally, attaches a formyl group to the free amino group of methionyl-tRNA(fMet). The formyl group appears to play a dual role in the initiator identity of N-formylmethionyl-tRNA by promoting its recognition by IF2 and preventing the misappropriation of this tRNA by the elongation apparatus. In Actinobacillus succinogenes (strain ATCC 55618 / DSM 22257 / CCUG 43843 / 130Z), this protein is Methionyl-tRNA formyltransferase.